The chain runs to 346 residues: 3-keto-steroid reductase ERG27 (346 aa).

NADP(+)-binding residues include leucine 19, threonine 42, and lysine 48. Active-site proton donor residues include serine 182 and tyrosine 205. Residues tyrosine 205, lysine 209, and serine 241 each coordinate NADP(+). Lysine 209 (lowers pKa of active site Tyr) is an active-site residue. The chain crosses the membrane as a helical span at residues 242–262 (FSFFQYLNVFTYYGMLFLFYL). Asparagine 272 carries N-linked (GlcNAc...) asparagine glycosylation.

Belongs to the short-chain dehydrogenases/reductases (SDR) family. ERG27 subfamily. Heterotetramer of ERG25, ERG26, ERG27 and ERG28. ERG28 acts as a scaffold to tether ERG27 and other 4,4-demethylation-related enzymes, forming a demethylation enzyme complex, in the endoplasmic reticulum. Interacts with ERG25 and ERG28. Also interacts with ERG7, but only in lipid particles.

The protein resides in the endoplasmic reticulum membrane. It is found in the lipid droplet. The catalysed reaction is 3-dehydro-4alpha-methylzymosterol + NADPH + H(+) = 4alpha-methylzymosterol + NADP(+). It functions in the pathway steroid biosynthesis; zymosterol biosynthesis; zymosterol from lanosterol: step 5/6. 3-keto-steroid reductase; part of the third module of ergosterol biosynthesis pathway that includes the late steps of the pathway. ERG27 is a catalytic component of the C-4 demethylation complex that catalyzes the reduction of the keto group on the C-3. The third module or late pathway involves the ergosterol synthesis itself through consecutive reactions that mainly occur in the endoplasmic reticulum (ER) membrane. Firstly, the squalene synthase ERG9 catalyzes the condensation of 2 farnesyl pyrophosphate moieties to form squalene, which is the precursor of all steroids. Squalene synthase is crucial for balancing the incorporation of farnesyl diphosphate (FPP) into sterol and nonsterol isoprene synthesis. Secondly, the squalene epoxidase ERG1 catalyzes the stereospecific oxidation of squalene to (S)-2,3-epoxysqualene, which is considered to be a rate-limiting enzyme in steroid biosynthesis. Then, the lanosterol synthase ERG7 catalyzes the cyclization of (S)-2,3 oxidosqualene to lanosterol, a reaction that forms the sterol core. In the next steps, lanosterol is transformed to zymosterol through a complex process involving various demethylation, reduction and desaturation reactions. The lanosterol 14-alpha-demethylase ERG11 (also known as CYP51) catalyzes C14-demethylation of lanosterol to produce 4,4'-dimethyl cholesta-8,14,24-triene-3-beta-ol, which is critical for ergosterol biosynthesis. The C-14 reductase ERG24 reduces the C14=C15 double bond of 4,4-dimethyl-cholesta-8,14,24-trienol to produce 4,4-dimethyl-cholesta-8,24-dienol. 4,4-dimethyl-cholesta-8,24-dienol is substrate of the C-4 demethylation complex ERG25-ERG26-ERG27 in which ERG25 catalyzes the three-step monooxygenation required for the demethylation of 4,4-dimethyl and 4alpha-methylsterols, ERG26 catalyzes the oxidative decarboxylation that results in a reduction of the 3-beta-hydroxy group at the C-3 carbon to an oxo group, and ERG27 is responsible for the reduction of the keto group on the C-3. ERG28 has a role as a scaffold to help anchor ERG25, ERG26 and ERG27 to the endoplasmic reticulum and ERG29 regulates the activity of the iron-containing C4-methylsterol oxidase ERG25. Then, the sterol 24-C-methyltransferase ERG6 catalyzes the methyl transfer from S-adenosyl-methionine to the C-24 of zymosterol to form fecosterol. The C-8 sterol isomerase ERG2 catalyzes the reaction which results in unsaturation at C-7 in the B ring of sterols and thus converts fecosterol to episterol. The sterol-C5-desaturase ERG3 then catalyzes the introduction of a C-5 double bond in the B ring to produce 5-dehydroepisterol. The C-22 sterol desaturase ERG5 further converts 5-dehydroepisterol into ergosta-5,7,22,24(28)-tetraen-3beta-ol by forming the C-22(23) double bond in the sterol side chain. Finally, ergosta-5,7,22,24(28)-tetraen-3beta-ol is substrate of the C-24(28) sterol reductase ERG4 to produce ergosterol. Its function is as follows. Facilitates the association of ERG7 with lipid particles preventing its digestion in the endoplasmic reticulum and the lipid particles. This Candida albicans (strain SC5314 / ATCC MYA-2876) (Yeast) protein is 3-keto-steroid reductase ERG27.